Consider the following 505-residue polypeptide: Histidine ammonia-lyase (505 aa).

The 5-imidazolinone (Ala-Gly) cross-link spans 141–143 (ASG). Position 142 is a 2,3-didehydroalanine (Ser) (S142).

It belongs to the PAL/histidase family. Contains an active site 4-methylidene-imidazol-5-one (MIO), which is formed autocatalytically by cyclization and dehydration of residues Ala-Ser-Gly.

The protein localises to the cytoplasm. The catalysed reaction is L-histidine = trans-urocanate + NH4(+). The protein operates within amino-acid degradation; L-histidine degradation into L-glutamate; N-formimidoyl-L-glutamate from L-histidine: step 1/3. This chain is Histidine ammonia-lyase, found in Bacillus cereus (strain 03BB102).